The chain runs to 169 residues: Putative hydrolase 111R (169 aa).

The 124-residue stretch at 46 to 169 (FEKRKAGVFV…QKILMALSCN (124 aa)) folds into the Nudix hydrolase domain. Positions 76 to 98 (GHMEAYDHSPKTCAERELKEETG) match the Nudix box motif. Residues Glu-92, Glu-96, and Asp-138 each contribute to the Mg(2+) site.

This sequence belongs to the Nudix hydrolase family. It depends on Mg(2+) as a cofactor. Mn(2+) is required as a cofactor.

The protein is Putative hydrolase 111R of Aedes vexans (Inland floodwater mosquito).